We begin with the raw amino-acid sequence, 280 residues long: F420-dependent methylenetetrahydromethanopterin dehydrogenase (280 aa).

This sequence belongs to the MTD family.

The catalysed reaction is 5,10-methylenetetrahydromethanopterin + oxidized coenzyme F420-(gamma-L-Glu)(n) + 2 H(+) = 5,10-methenyl-5,6,7,8-tetrahydromethanopterin + reduced coenzyme F420-(gamma-L-Glu)(n). Its pathway is one-carbon metabolism; methanogenesis from CO(2); 5,10-methylene-5,6,7,8-tetrahydromethanopterin from 5,10-methenyl-5,6,7,8-tetrahydromethanopterin (coenzyme F420 route): step 1/1. Catalyzes the reversible reduction of methenyl-H(4)MPT(+) to methylene-H(4)MPT. The protein is F420-dependent methylenetetrahydromethanopterin dehydrogenase of Methanosphaerula palustris (strain ATCC BAA-1556 / DSM 19958 / E1-9c).